Reading from the N-terminus, the 667-residue chain is Protein angel homolog 1 (667 aa).

Phosphoserine occurs at positions 77 and 105.

Belongs to the CCR4/nocturin family.

This chain is Protein angel homolog 1, found in Mus musculus (Mouse).